The primary structure comprises 164 residues: Phosphopantetheine adenylyltransferase (164 aa).

Thr-10 contributes to the substrate binding site. ATP contacts are provided by residues 10 to 11 (TF) and His-18. 3 residues coordinate substrate: Lys-44, Leu-76, and Arg-90. ATP-binding positions include 91-93 (GLR), Glu-101, and 126-132 (YAFISSS).

It belongs to the bacterial CoaD family. In terms of assembly, homohexamer. Mg(2+) serves as cofactor.

Its subcellular location is the cytoplasm. The enzyme catalyses (R)-4'-phosphopantetheine + ATP + H(+) = 3'-dephospho-CoA + diphosphate. It functions in the pathway cofactor biosynthesis; coenzyme A biosynthesis; CoA from (R)-pantothenate: step 4/5. Reversibly transfers an adenylyl group from ATP to 4'-phosphopantetheine, yielding dephospho-CoA (dPCoA) and pyrophosphate. The chain is Phosphopantetheine adenylyltransferase from Halorhodospira halophila (strain DSM 244 / SL1) (Ectothiorhodospira halophila (strain DSM 244 / SL1)).